Here is a 297-residue protein sequence, read N- to C-terminus: Nucleotide-binding protein Bphyt_0592 (297 aa).

8 to 15 (GISGSGKS) provides a ligand contact to ATP. Residue 57-60 (DARS) coordinates GTP.

The protein belongs to the RapZ-like family.

Functionally, displays ATPase and GTPase activities. The sequence is that of Nucleotide-binding protein Bphyt_0592 from Paraburkholderia phytofirmans (strain DSM 17436 / LMG 22146 / PsJN) (Burkholderia phytofirmans).